The sequence spans 113 residues: Small ribosomal subunit protein eS24 (113 aa).

Belongs to the eukaryotic ribosomal protein eS24 family.

The protein is Small ribosomal subunit protein eS24 of Metallosphaera sedula (strain ATCC 51363 / DSM 5348 / JCM 9185 / NBRC 15509 / TH2).